Consider the following 509-residue polypeptide: ATP synthase subunit alpha (509 aa).

Position 169–176 (169–176) interacts with ATP; sequence GDRQTGKT.

This sequence belongs to the ATPase alpha/beta chains family. In terms of assembly, F-type ATPases have 2 components, CF(1) - the catalytic core - and CF(0) - the membrane proton channel. CF(1) has five subunits: alpha(3), beta(3), gamma(1), delta(1), epsilon(1). CF(0) has three main subunits: a(1), b(2) and c(9-12). The alpha and beta chains form an alternating ring which encloses part of the gamma chain. CF(1) is attached to CF(0) by a central stalk formed by the gamma and epsilon chains, while a peripheral stalk is formed by the delta and b chains.

The protein resides in the cell inner membrane. The enzyme catalyses ATP + H2O + 4 H(+)(in) = ADP + phosphate + 5 H(+)(out). In terms of biological role, produces ATP from ADP in the presence of a proton gradient across the membrane. The alpha chain is a regulatory subunit. The polypeptide is ATP synthase subunit alpha (Brucella ovis (strain ATCC 25840 / 63/290 / NCTC 10512)).